The chain runs to 341 residues: S-adenosylmethionine:tRNA ribosyltransferase-isomerase (341 aa).

Belongs to the QueA family. Monomer.

It is found in the cytoplasm. The catalysed reaction is 7-aminomethyl-7-carbaguanosine(34) in tRNA + S-adenosyl-L-methionine = epoxyqueuosine(34) in tRNA + adenine + L-methionine + 2 H(+). It participates in tRNA modification; tRNA-queuosine biosynthesis. Its function is as follows. Transfers and isomerizes the ribose moiety from AdoMet to the 7-aminomethyl group of 7-deazaguanine (preQ1-tRNA) to give epoxyqueuosine (oQ-tRNA). In Chlorobium phaeovibrioides (strain DSM 265 / 1930) (Prosthecochloris vibrioformis (strain DSM 265)), this protein is S-adenosylmethionine:tRNA ribosyltransferase-isomerase.